Here is a 432-residue protein sequence, read N- to C-terminus: Myb family transcription factor EFM (432 aa).

Residues 36 to 81 (LEDLLSRLEQERLKIDAFKRELPLCMQLLNNAVEVYKQQLEAYRAN) are a coiled coil. Composition is skewed to polar residues over residues 123-139 (SQSE…TDQS) and 187-197 (SPTNEHTNGQD). Residues 123–237 (SQSETKPKNI…SQSNRKARRC (115 aa)) form a disordered region. A compositionally biased stretch (low complexity) spans 201-231 (ESMINNDNNYNNNNNNNSNSNGVSSTTSQSN). Positions 230-290 (SNRKARRCWS…HLQKYRLHTR (61 aa)) constitute an HTH myb-type domain. Positions 261-286 (PKQIRELMKVDGLTNDEVKSHLQKYR) form a DNA-binding region, H-T-H motif. Residues 354–412 (FYTTPPPPQPLHHHHFQTFNGSSGGTASTDSTHHQVTDSPTVEGKSPESGGGERKGLAA) form a disordered region.

In terms of assembly, interacts with JMJ30, but not with SVP, FLC or CO. Specifically expressed in vascular tissues of cotyledons, rosette leaves and cauline leaves. Not detected in the vegetative shoot apical meristem.

The protein resides in the nucleus. Its function is as follows. Transcription factor acting as a flowering repressor, directly repressing FT expression in a dosage-dependent manner in the leaf vasculature. This is Myb family transcription factor EFM from Arabidopsis thaliana (Mouse-ear cress).